The sequence spans 190 residues: MSNSIIQSPDLGDVTGYLRDRIRTVPDWPQPGVMFRDITPLLQNPKTLRVLIDVFVHRYMDQNLDLVAGIDARGFILGSIIAYELNLGFVPIRKKGKLPFQTVAEEYELEYGSATVEIHADACKPGDRVLLIDDLIATGGTMMAGRKLLERLGATVVEGGAIVDLPELGGSKLLQASGLSLFTVCNFDGH.

Belongs to the purine/pyrimidine phosphoribosyltransferase family. Homodimer.

Its subcellular location is the cytoplasm. It catalyses the reaction AMP + diphosphate = 5-phospho-alpha-D-ribose 1-diphosphate + adenine. It participates in purine metabolism; AMP biosynthesis via salvage pathway; AMP from adenine: step 1/1. Functionally, catalyzes a salvage reaction resulting in the formation of AMP, that is energically less costly than de novo synthesis. The protein is Adenine phosphoribosyltransferase of Cupriavidus metallidurans (strain ATCC 43123 / DSM 2839 / NBRC 102507 / CH34) (Ralstonia metallidurans).